Consider the following 214-residue polypeptide: Leucyl/phenylalanyl-tRNA--protein transferase (214 aa).

Belongs to the L/F-transferase family.

It localises to the cytoplasm. It carries out the reaction N-terminal L-lysyl-[protein] + L-leucyl-tRNA(Leu) = N-terminal L-leucyl-L-lysyl-[protein] + tRNA(Leu) + H(+). The enzyme catalyses N-terminal L-arginyl-[protein] + L-leucyl-tRNA(Leu) = N-terminal L-leucyl-L-arginyl-[protein] + tRNA(Leu) + H(+). It catalyses the reaction L-phenylalanyl-tRNA(Phe) + an N-terminal L-alpha-aminoacyl-[protein] = an N-terminal L-phenylalanyl-L-alpha-aminoacyl-[protein] + tRNA(Phe). Its function is as follows. Functions in the N-end rule pathway of protein degradation where it conjugates Leu, Phe and, less efficiently, Met from aminoacyl-tRNAs to the N-termini of proteins containing an N-terminal arginine or lysine. This chain is Leucyl/phenylalanyl-tRNA--protein transferase, found in Cereibacter sphaeroides (strain KD131 / KCTC 12085) (Rhodobacter sphaeroides).